Consider the following 208-residue polypeptide: Large ribosomal subunit protein bL25 (208 aa).

The interval 163–208 (DYSYNHEPDEVVASILPPQKQEETEAESAAQDVEEPEKGTEEEKEE) is disordered. Residues 198–208 (PEKGTEEEKEE) show a composition bias toward basic and acidic residues.

The protein belongs to the bacterial ribosomal protein bL25 family. CTC subfamily. As to quaternary structure, part of the 50S ribosomal subunit; part of the 5S rRNA/L5/L18/L25 subcomplex. Contacts the 5S rRNA. Binds to the 5S rRNA independently of L5 and L18.

Functionally, this is one of the proteins that binds to the 5S RNA in the ribosome where it forms part of the central protuberance. The protein is Large ribosomal subunit protein bL25 of Bacillus licheniformis (strain ATCC 14580 / DSM 13 / JCM 2505 / CCUG 7422 / NBRC 12200 / NCIMB 9375 / NCTC 10341 / NRRL NRS-1264 / Gibson 46).